We begin with the raw amino-acid sequence, 430 residues long: Synaptotagmin-11 (430 aa).

Topologically, residues 1 to 15 (MAEITNIRPSFDVSP) are vesicular. The chain crosses the membrane as a helical span at residues 16 to 36 (VAAGLIGASVLVVCVSVTVFV). Residues 37–430 (WTCCHQQAEK…VAKWHSLSEY (394 aa)) lie on the Cytoplasmic side of the membrane. The tract at residues 132–154 (RSPMTSLTPGESKPTSPSSPEED) is disordered. At serine 133 the chain carries Phosphoserine. A compositionally biased stretch (low complexity) spans 140–150 (PGESKPTSPSS). C2 domains lie at 156–278 (MLGS…QLTR) and 290–425 (SRGE…AKWH). Positions 249, 252, and 255 each coordinate Ca(2+).

The protein belongs to the synaptotagmin family. Homodimer. Can also form heterodimers. Interacts with PRKN. Interacts (via C2 2 domain) with AGO2 and SND1; the interaction with SND1 is direct. Interacts with KIF1A; the interaction increases in presence of calcium. Ca(2+) serves as cofactor. Ubiquitinated, at least by PRKN, and targeted to the proteasome complex for degradation. Ubiquitination is inhibited by ATP13A2. In terms of tissue distribution, highly expressed in brain and at lower levels in other tissues.

It is found in the cytoplasmic vesicle membrane. It localises to the perikaryon. The protein localises to the golgi apparatus. The protein resides in the trans-Golgi network membrane. Its subcellular location is the recycling endosome membrane. It is found in the lysosome membrane. It localises to the cytoplasmic vesicle. The protein localises to the phagosome. The protein resides in the cell projection. Its subcellular location is the axon. It is found in the dendrite. It localises to the postsynaptic density. The protein localises to the clathrin-coated vesicle membrane. In terms of biological role, synaptotagmin family member involved in vesicular and membrane trafficking which does not bind Ca(2+). Inhibits clathrin-mediated and bulk endocytosis in neurons, functions to ensure precision in vesicle retrieval. Plays an important role in dopamine transmission by regulating endocytosis and the vesicle-recycling process. Essential component of a neuronal vesicular trafficking pathway that differs from the synaptic vesicle trafficking pathway but is crucial for development and synaptic plasticity. In macrophages and microglia, inhibits the conventional cytokine secretion, of at least IL6 and TNF, and phagocytosis. In astrocytes, regulates lysosome exocytosis, mechanism required for the repair of injured astrocyte cell membrane. Required for the ATP13A2-mediated regulation of the autophagy-lysosome pathway. The polypeptide is Synaptotagmin-11 (Rattus norvegicus (Rat)).